A 452-amino-acid chain; its full sequence is tRNA modification GTPase MnmE (452 aa).

The (6S)-5-formyl-5,6,7,8-tetrahydrofolate site is built by Arg-21, Glu-78, and Lys-118. Residues Gly-214 to Gly-375 form the TrmE-type G domain. Residue Asn-224 participates in K(+) binding. GTP-binding positions include Asn-224 to Ser-229, Thr-243 to Thr-249, Asp-268 to Gly-271, and Asn-333 to Asp-336. Ser-228 serves as a coordination point for Mg(2+). K(+)-binding residues include Thr-243, Ile-245, and Thr-248. Thr-249 contributes to the Mg(2+) binding site. Lys-452 contacts (6S)-5-formyl-5,6,7,8-tetrahydrofolate.

This sequence belongs to the TRAFAC class TrmE-Era-EngA-EngB-Septin-like GTPase superfamily. TrmE GTPase family. In terms of assembly, homodimer. Heterotetramer of two MnmE and two MnmG subunits. Requires K(+) as cofactor.

It localises to the cytoplasm. Functionally, exhibits a very high intrinsic GTPase hydrolysis rate. Involved in the addition of a carboxymethylaminomethyl (cmnm) group at the wobble position (U34) of certain tRNAs, forming tRNA-cmnm(5)s(2)U34. In Pasteurella multocida (strain Pm70), this protein is tRNA modification GTPase MnmE.